The following is a 642-amino-acid chain: Threonine--tRNA ligase (642 aa).

Residues 1 to 61 (MPIITLPDGS…SEDANLEIIT (61 aa)) form the TGS domain. The tract at residues 243-534 (DHRKIGKALN…ITEEYAGFFP (292 aa)) is catalytic. Zn(2+) contacts are provided by Cys334, His385, and His511.

Belongs to the class-II aminoacyl-tRNA synthetase family. Homodimer. Zn(2+) is required as a cofactor.

It localises to the cytoplasm. The catalysed reaction is tRNA(Thr) + L-threonine + ATP = L-threonyl-tRNA(Thr) + AMP + diphosphate + H(+). Its function is as follows. Catalyzes the attachment of threonine to tRNA(Thr) in a two-step reaction: L-threonine is first activated by ATP to form Thr-AMP and then transferred to the acceptor end of tRNA(Thr). Also edits incorrectly charged L-seryl-tRNA(Thr). This chain is Threonine--tRNA ligase, found in Histophilus somni (strain 2336) (Haemophilus somnus).